A 252-amino-acid polypeptide reads, in one-letter code: 2-succinyl-6-hydroxy-2,4-cyclohexadiene-1-carboxylate synthase (252 aa).

Belongs to the AB hydrolase superfamily. MenH family. In terms of assembly, monomer.

It carries out the reaction 5-enolpyruvoyl-6-hydroxy-2-succinyl-cyclohex-3-ene-1-carboxylate = (1R,6R)-6-hydroxy-2-succinyl-cyclohexa-2,4-diene-1-carboxylate + pyruvate. It participates in quinol/quinone metabolism; 1,4-dihydroxy-2-naphthoate biosynthesis; 1,4-dihydroxy-2-naphthoate from chorismate: step 3/7. Its pathway is quinol/quinone metabolism; menaquinone biosynthesis. In terms of biological role, catalyzes a proton abstraction reaction that results in 2,5-elimination of pyruvate from 2-succinyl-5-enolpyruvyl-6-hydroxy-3-cyclohexene-1-carboxylate (SEPHCHC) and the formation of 2-succinyl-6-hydroxy-2,4-cyclohexadiene-1-carboxylate (SHCHC). The chain is 2-succinyl-6-hydroxy-2,4-cyclohexadiene-1-carboxylate synthase from Salmonella typhi.